Reading from the N-terminus, the 599-residue chain is Elongation factor 4 (599 aa).

Positions 3 to 185 constitute a tr-type G domain; sequence KNIRNFSIIA…AIVERIPPPS (183 aa). GTP contacts are provided by residues 15-20 and 132-135; these read DHGKST and NKID.

Belongs to the TRAFAC class translation factor GTPase superfamily. Classic translation factor GTPase family. LepA subfamily.

Its subcellular location is the cell membrane. It carries out the reaction GTP + H2O = GDP + phosphate + H(+). Required for accurate and efficient protein synthesis under certain stress conditions. May act as a fidelity factor of the translation reaction, by catalyzing a one-codon backward translocation of tRNAs on improperly translocated ribosomes. Back-translocation proceeds from a post-translocation (POST) complex to a pre-translocation (PRE) complex, thus giving elongation factor G a second chance to translocate the tRNAs correctly. Binds to ribosomes in a GTP-dependent manner. The sequence is that of Elongation factor 4 from Syntrophomonas wolfei subsp. wolfei (strain DSM 2245B / Goettingen).